Here is a 95-residue protein sequence, read N- to C-terminus: Co-chaperonin GroES (95 aa).

This sequence belongs to the GroES chaperonin family. Heptamer of 7 subunits arranged in a ring. Interacts with the chaperonin GroEL.

It is found in the cytoplasm. In terms of biological role, together with the chaperonin GroEL, plays an essential role in assisting protein folding. The GroEL-GroES system forms a nano-cage that allows encapsulation of the non-native substrate proteins and provides a physical environment optimized to promote and accelerate protein folding. GroES binds to the apical surface of the GroEL ring, thereby capping the opening of the GroEL channel. The chain is Co-chaperonin GroES from Rickettsia akari (strain Hartford).